Here is a 276-residue protein sequence, read N- to C-terminus: Ribosomal RNA small subunit methyltransferase A (276 aa).

S-adenosyl-L-methionine-binding residues include Asn16, Leu18, Gly43, Glu64, Asp89, and Asn109.

It belongs to the class I-like SAM-binding methyltransferase superfamily. rRNA adenine N(6)-methyltransferase family. RsmA subfamily.

It localises to the cytoplasm. It catalyses the reaction adenosine(1518)/adenosine(1519) in 16S rRNA + 4 S-adenosyl-L-methionine = N(6)-dimethyladenosine(1518)/N(6)-dimethyladenosine(1519) in 16S rRNA + 4 S-adenosyl-L-homocysteine + 4 H(+). Its function is as follows. Specifically dimethylates two adjacent adenosines (A1518 and A1519) in the loop of a conserved hairpin near the 3'-end of 16S rRNA in the 30S particle. May play a critical role in biogenesis of 30S subunits. The chain is Ribosomal RNA small subunit methyltransferase A from Marinobacter nauticus (strain ATCC 700491 / DSM 11845 / VT8) (Marinobacter aquaeolei).